Here is a 309-residue protein sequence, read N- to C-terminus: ESX-3 secretion system protein EccE3 (309 aa).

Transmembrane regions (helical) follow at residues 5–25 (IALA…QTTT) and 29–49 (VLGV…GMFL).

Belongs to the EccE family. Part of the ESX-3 / type VII secretion system (T7SS), which is composed of cytosolic and membrane components. The ESX-3 membrane complex is composed of EccB3, EccC3, EccD3 and EccE3.

The protein resides in the cell inner membrane. Functionally, part of the ESX-3 specialized secretion system, which is required for siderophore-mediated iron acquisition and for the secretion of EsxH and EsxG. This Mycolicibacterium smegmatis (strain ATCC 700084 / mc(2)155) (Mycobacterium smegmatis) protein is ESX-3 secretion system protein EccE3.